A 115-amino-acid polypeptide reads, in one-letter code: Disintegrin EC6 subunit alpha (115 aa).

An N-terminal signal peptide occupies residues 1 to 20; sequence MIQVLLVIICLAVFPYQGSS. Positions 21–47 are excised as a propeptide; sequence IILESGNINDYEIVYPKKVAVLPTGAM. The region spanning 48-112 is the Disintegrin domain; the sequence is NSVHPCCDPV…DCPRNRYKGK (65 aa). Disulfide bonds link cysteine 53–cysteine 76, cysteine 67–cysteine 73, cysteine 72–cysteine 97, and cysteine 85–cysteine 104. Residues 89–91 carry the Cell attachment site; atypical (MLD) motif; that stretch reads MLD.

This sequence belongs to the disintegrin family. Dimeric disintegrin subfamily. As to quaternary structure, heterodimer with subunit beta; disulfide-linked. Expressed by the venom gland.

It is found in the secreted. Functionally, potently inhibits adhesion of alpha-4/beta-1 (ITGA4/ITGB1) and alpha-9/beta-1 (ITGA9/ITGB1) integrins to VCAM1, and adhesion of alpha-5/beta-1 (ITGA5/ITGB1) integrin to fibronectin. Has a much less effect on alpha-IIb/beta-3 (ITGA2B/ITGB3) integrin. Also potently inhibits neutrophil migration across TNF-alpha-activated human umbilical endothelial cells. This is Disintegrin EC6 subunit alpha from Echis carinatus sochureki (Saw-scaled viper).